Consider the following 512-residue polypeptide: Maturase K (512 aa).

Belongs to the intron maturase 2 family. MatK subfamily.

Its subcellular location is the plastid. The protein localises to the chloroplast. Usually encoded in the trnK tRNA gene intron. Probably assists in splicing its own and other chloroplast group II introns. In Lilium canadense (Canada lily), this protein is Maturase K.